We begin with the raw amino-acid sequence, 103 residues long: Large ribosomal subunit protein bL21 (103 aa).

The segment covering 83–92 has biased composition (basic residues); sequence YRRKKGHRQP. Residues 83 to 103 form a disordered region; the sequence is YRRKKGHRQPFSRVTVEKIEA.

It belongs to the bacterial ribosomal protein bL21 family. As to quaternary structure, part of the 50S ribosomal subunit. Contacts protein L20.

In terms of biological role, this protein binds to 23S rRNA in the presence of protein L20. The chain is Large ribosomal subunit protein bL21 from Pelotomaculum thermopropionicum (strain DSM 13744 / JCM 10971 / SI).